The chain runs to 362 residues: Hydroxycarboxylate dehydrogenase A (362 aa).

Residues Asp-173, His-257, and His-274 each contribute to the Zn(2+) site.

It belongs to the iron-containing alcohol dehydrogenase family. The cofactor is Zn(2+).

The enzyme catalyses 2-hydroxybutanoate + NADP(+) = 2-oxobutanoate + NADPH + H(+). The catalysed reaction is 2-hydroxyglutarate + NADP(+) = 2-oxoglutarate + NADPH + H(+). Its function is as follows. Catalyzes the NADPH-dependent reduction of 2-oxoglutarate and 2-oxobutanoate, leading to the respective 2-hydroxycarboxylate. Cannot use NADH instead of NADPH as a redox partner. Do not catalyze the reverse reactions. The protein is Hydroxycarboxylate dehydrogenase A of Escherichia coli (strain K12).